A 554-amino-acid polypeptide reads, in one-letter code: Glucose-6-phosphate isomerase (554 aa).

The active-site Proton donor is the Glu359. Active-site residues include His390 and Lys518.

This sequence belongs to the GPI family.

It is found in the cytoplasm. It carries out the reaction alpha-D-glucose 6-phosphate = beta-D-fructose 6-phosphate. It functions in the pathway carbohydrate biosynthesis; gluconeogenesis. Its pathway is carbohydrate degradation; glycolysis; D-glyceraldehyde 3-phosphate and glycerone phosphate from D-glucose: step 2/4. Catalyzes the reversible isomerization of glucose-6-phosphate to fructose-6-phosphate. In Pseudomonas savastanoi pv. phaseolicola (strain 1448A / Race 6) (Pseudomonas syringae pv. phaseolicola (strain 1448A / Race 6)), this protein is Glucose-6-phosphate isomerase.